The sequence spans 242 residues: Biosynthetic peptidoglycan transglycosylase (242 aa).

A helical transmembrane segment spans residues 19-39 (LMVVLAIFWGGGIALFSVAPV).

It belongs to the glycosyltransferase 51 family.

The protein resides in the cell inner membrane. The catalysed reaction is [GlcNAc-(1-&gt;4)-Mur2Ac(oyl-L-Ala-gamma-D-Glu-L-Lys-D-Ala-D-Ala)](n)-di-trans,octa-cis-undecaprenyl diphosphate + beta-D-GlcNAc-(1-&gt;4)-Mur2Ac(oyl-L-Ala-gamma-D-Glu-L-Lys-D-Ala-D-Ala)-di-trans,octa-cis-undecaprenyl diphosphate = [GlcNAc-(1-&gt;4)-Mur2Ac(oyl-L-Ala-gamma-D-Glu-L-Lys-D-Ala-D-Ala)](n+1)-di-trans,octa-cis-undecaprenyl diphosphate + di-trans,octa-cis-undecaprenyl diphosphate + H(+). It functions in the pathway cell wall biogenesis; peptidoglycan biosynthesis. In terms of biological role, peptidoglycan polymerase that catalyzes glycan chain elongation from lipid-linked precursors. In Escherichia coli O127:H6 (strain E2348/69 / EPEC), this protein is Biosynthetic peptidoglycan transglycosylase.